Reading from the N-terminus, the 425-residue chain is 2-methylserine hydroxymethyltransferase (425 aa).

(6S)-5,6,7,8-tetrahydrofolate is bound by residues L126 and 130 to 132 (GHL). The residue at position 235 (K235) is an N6-(pyridoxal phosphate)lysine.

The protein belongs to the SHMT family. In terms of assembly, homodimer. Pyridoxal 5'-phosphate is required as a cofactor.

The protein resides in the cytoplasm. It catalyses the reaction (6R)-5,10-methylene-5,6,7,8-tetrahydrofolate + D-alanine + H2O = 2-methylserine + (6S)-5,6,7,8-tetrahydrofolate. It functions in the pathway one-carbon metabolism; tetrahydrofolate interconversion. Its function is as follows. Catalyzes the reversible interconversion of alpha-methyl-L-serine to D-alanine with tetrahydrofolate (THF) serving as the one-carbon carrier. Cannot use alpha-methyl-D-serine, L-serine, D-serine or L-alanine. In Aminobacter sp, this protein is 2-methylserine hydroxymethyltransferase.